The sequence spans 447 residues: Tektin-4 (447 aa).

Coiled coils occupy residues 322–348 and 375–423; these read LRKTLTEITDQEHQIAALKQAIKDKEA and FRLL…TNSL.

Belongs to the tektin family. In terms of assembly, microtubule inner protein component of sperm flagellar doublet microtubules. Ubiquitinated, leading to its degradation. Deubiquitinated by USP16, promoting its stability. Detected in testis, where it is weakly expressed in round spermatids, and strongly expressed in the flagellum of step 16 elongated spermatids (at protein level). Expressed in spermatozoa. In the sperm flagellum, localizes to the principal piece and midpiece (at protein level). Specifically expressed in testis; not detected in other tissues tested.

It is found in the cytoplasm. The protein localises to the cytoskeleton. The protein resides in the cilium axoneme. Its subcellular location is the flagellum axoneme. In terms of biological role, microtubule inner protein (MIP) part of the dynein-decorated doublet microtubules (DMTs) in cilia and flagellar axoneme. Forms filamentous polymers in the walls of ciliary and flagellar microtubules. Contributes to normal sperm motility. This is Tektin-4 (Tekt4) from Mus musculus (Mouse).